A 20-amino-acid polypeptide reads, in one-letter code: Cytochrome P450 2A7 (20 aa).

The protein belongs to the cytochrome P450 family. Heme serves as cofactor.

It is found in the endoplasmic reticulum membrane. It localises to the microsome membrane. It carries out the reaction an organic molecule + reduced [NADPH--hemoprotein reductase] + O2 = an alcohol + oxidized [NADPH--hemoprotein reductase] + H2O + H(+). Its function is as follows. Exhibits a high coumarin 7-hydroxylase activity. This is Cytochrome P450 2A7 (CYP2A7) from Papio sp. (Baboon).